Consider the following 93-residue polypeptide: MPRSLKKGPFVDDHLIKKVDAQNEAGSKNVIKTWSRRSMIIPAMLGHTIAVHNGKTHIPVFVTESMVGHKLGEFSPTRTFRGHVKDDRKSKRR.

The segment at 73-93 (EFSPTRTFRGHVKDDRKSKRR) is disordered. Over residues 83–93 (HVKDDRKSKRR) the composition is skewed to basic and acidic residues.

Belongs to the universal ribosomal protein uS19 family.

Its function is as follows. Protein S19 forms a complex with S13 that binds strongly to the 16S ribosomal RNA. In Streptomyces avermitilis (strain ATCC 31267 / DSM 46492 / JCM 5070 / NBRC 14893 / NCIMB 12804 / NRRL 8165 / MA-4680), this protein is Small ribosomal subunit protein uS19.